The sequence spans 312 residues: MALYAVDKPLHLTSHDVVEEARRRLSTRRVGHTGTLDPLATGLLLLVTNESTKLVPFLSGEDKEYIAWVSFGATTPTLDAEGPISEEAPARFDRKDLEAALPRFLEVREQVPPLYSAIKVGGKRAYEAAREGKPLALGPRPVRYLEVELLAFDPEPIPHPIAPSARGWRLAERRGRPVRLPRPLGAYPTAVVRLVVGPGTYVRAFARDLGEMLGTKAFLSGLVRTRVGRVGLERAVALSDLSPEKAIPELDVLPFPVVELSHTEARRVLEGMPLPIPAMGYVTLVDSKRRLLAIAEGDGFKLKIRRVFAKEA.

Asp37 functions as the Nucleophile in the catalytic mechanism.

Belongs to the pseudouridine synthase TruB family. Type 1 subfamily.

It catalyses the reaction uridine(55) in tRNA = pseudouridine(55) in tRNA. Its function is as follows. Responsible for synthesis of pseudouridine from uracil-55 in the psi GC loop of transfer RNAs. The polypeptide is tRNA pseudouridine synthase B (Thermus thermophilus (strain ATCC BAA-163 / DSM 7039 / HB27)).